Consider the following 562-residue polypeptide: Dihydroxy-acid dehydratase (562 aa).

Mg(2+) is bound at residue aspartate 80. Position 121 (cysteine 121) interacts with [2Fe-2S] cluster. Mg(2+) contacts are provided by aspartate 122 and lysine 123. Lysine 123 is modified (N6-carboxylysine). Cysteine 194 is a binding site for [2Fe-2S] cluster. Glutamate 446 provides a ligand contact to Mg(2+). Serine 472 acts as the Proton acceptor in catalysis.

It belongs to the IlvD/Edd family. In terms of assembly, homodimer. It depends on [2Fe-2S] cluster as a cofactor. The cofactor is Mg(2+).

It catalyses the reaction (2R)-2,3-dihydroxy-3-methylbutanoate = 3-methyl-2-oxobutanoate + H2O. The enzyme catalyses (2R,3R)-2,3-dihydroxy-3-methylpentanoate = (S)-3-methyl-2-oxopentanoate + H2O. It functions in the pathway amino-acid biosynthesis; L-isoleucine biosynthesis; L-isoleucine from 2-oxobutanoate: step 3/4. Its pathway is amino-acid biosynthesis; L-valine biosynthesis; L-valine from pyruvate: step 3/4. Its function is as follows. Functions in the biosynthesis of branched-chain amino acids. Catalyzes the dehydration of (2R,3R)-2,3-dihydroxy-3-methylpentanoate (2,3-dihydroxy-3-methylvalerate) into 2-oxo-3-methylpentanoate (2-oxo-3-methylvalerate) and of (2R)-2,3-dihydroxy-3-methylbutanoate (2,3-dihydroxyisovalerate) into 2-oxo-3-methylbutanoate (2-oxoisovalerate), the penultimate precursor to L-isoleucine and L-valine, respectively. The polypeptide is Dihydroxy-acid dehydratase (Staphylococcus haemolyticus (strain JCSC1435)).